A 165-amino-acid chain; its full sequence is MLKPEMIEKLNEQMNLELYSSLLYQQMSAWCSYHTFEGAAAFLRRHAQEEMTHMQRLFDYLTDTGNLPRINTVESPFAEYSSLDELFQETYKHEQLITQKINELAHAAMTNQDYPTFNFLQWYVSEQHEEEKLFKSIIDKLSLAGKSGEGLYFIDKELSTLDTQN.

The Ferritin-like diiron domain occupies 1 to 145 (MLKPEMIEKL…SIIDKLSLAG (145 aa)). Residues Glu17, Glu49, Glu50, His53, Glu94, Glu126, Gln127, and Glu130 each coordinate Fe cation.

Belongs to the ferritin family. Prokaryotic subfamily. In terms of assembly, homooligomer of 24 subunits that assemble into a spherical protein shell (12 +/- 1 nM diameter) that can sequester at least 2000 iron atoms.

Its subcellular location is the cytoplasm. The enzyme catalyses 4 Fe(2+) + O2 + 6 H2O = 4 iron(III) oxide-hydroxide + 12 H(+). Its function is as follows. Iron-storage protein. The polypeptide is Bacterial non-heme ferritin (ftnA) (Escherichia coli O157:H7).